We begin with the raw amino-acid sequence, 477 residues long: MTDKAIRTRFAPSPTGMFHVGGARSALFNWALALQQPEGKFVLRIEDTDAARNRPEWTEGILRALSALGIDERDPHFEGPYFQSAYADKHREVAEELYRKGRAYYCDCTREQIQERRGNPHLGYDGYCRDRGLEPGPGRALRFRVPEGGPTVVDDKIRGRVEFDHSAIEDFVIARSDGSPLFVLANVVDDVEMAITHVVRGEEHLSNTPKQQLLWEALGQTPPVWAHLPVIVNEKRQKLSKRRDKVALEDYLAEGYLPEAMVNYLMLLGWGPGDDREIMPFSEMVPLFRLEDVNSSSAFFDEKKLRAFNGEYIRALDTTEFVERCAPWLGSEKAPWPAENFDAQVFEAVAPLAQTRISVLSEIVSYVDFLFLDRPVEDEKSWAKAMKPGVGEEMLTAALERFSDPNLEWRAEPLKAALEEVAAAQGLKLGKAQAPVRVAVTGRTVGLPLFESLELLGRSRVQERLRAALEKLKAAGE.

The 'HIGH' region signature appears at 12-22 (PSPTGMFHVGG). Residues cysteine 106, cysteine 108, cysteine 128, and aspartate 130 each coordinate Zn(2+). The 'KMSKS' region signature appears at 238-242 (KLSKR). Residue lysine 241 participates in ATP binding.

Belongs to the class-I aminoacyl-tRNA synthetase family. Glutamate--tRNA ligase type 1 subfamily. In terms of assembly, monomer. Requires Zn(2+) as cofactor.

It is found in the cytoplasm. It catalyses the reaction tRNA(Glu) + L-glutamate + ATP = L-glutamyl-tRNA(Glu) + AMP + diphosphate. Functionally, catalyzes the attachment of glutamate to tRNA(Glu) in a two-step reaction: glutamate is first activated by ATP to form Glu-AMP and then transferred to the acceptor end of tRNA(Glu). The polypeptide is Glutamate--tRNA ligase (Thermobifida fusca (strain YX)).